The sequence spans 245 residues: 2,3-bisphosphoglycerate-dependent phosphoglycerate mutase (245 aa).

Substrate is bound by residues 8 to 15, 21 to 22, R60, 87 to 90, K98, 114 to 115, and 183 to 184; these read RHGQSLWN, TG, ERHY, RR, and GN. H9 functions as the Tele-phosphohistidine intermediate in the catalytic mechanism. The Proton donor/acceptor role is filled by E87.

Belongs to the phosphoglycerate mutase family. BPG-dependent PGAM subfamily.

The catalysed reaction is (2R)-2-phosphoglycerate = (2R)-3-phosphoglycerate. The protein operates within carbohydrate degradation; glycolysis; pyruvate from D-glyceraldehyde 3-phosphate: step 3/5. Its function is as follows. Catalyzes the interconversion of 2-phosphoglycerate and 3-phosphoglycerate. The protein is 2,3-bisphosphoglycerate-dependent phosphoglycerate mutase of Bacillus cereus (strain ZK / E33L).